Consider the following 459-residue polypeptide: Glutamyl-tRNA reductase (459 aa).

Residues 47-50 (TCNR), Ser140, 145-147 (EPQ), and Gln151 contribute to the substrate site. Residue Cys48 is the Nucleophile of the active site. 220-225 (AAGEMN) lines the NADP(+) pocket.

The protein belongs to the glutamyl-tRNA reductase family. Homodimer.

The enzyme catalyses (S)-4-amino-5-oxopentanoate + tRNA(Glu) + NADP(+) = L-glutamyl-tRNA(Glu) + NADPH + H(+). It participates in porphyrin-containing compound metabolism; protoporphyrin-IX biosynthesis; 5-aminolevulinate from L-glutamyl-tRNA(Glu): step 1/2. Its function is as follows. Catalyzes the NADPH-dependent reduction of glutamyl-tRNA(Glu) to glutamate 1-semialdehyde (GSA). In Psychrobacter arcticus (strain DSM 17307 / VKM B-2377 / 273-4), this protein is Glutamyl-tRNA reductase.